Reading from the N-terminus, the 494-residue chain is Solute carrier family 2, facilitated glucose transporter member 3 (494 aa).

At 1–10 the chain is on the cytoplasmic side; that stretch reads MGTTKVTTPL. A helical transmembrane segment spans residues 11–32; sequence IFAISIATIGSFQFGYNTGVIN. Residues 33-64 lie on the Extracellular side of the membrane; the sequence is APEAIIKDFLNYTLEERSETPPSSVLLTSLWS. A glycan (N-linked (GlcNAc...) asparagine) is linked at Asn43. A helical transmembrane segment spans residues 65-85; the sequence is LSVAIFSVGGMIGSFSVGLFV. At 86-90 the chain is on the cytoplasmic side; that stretch reads NRFGR. Residues 91 to 111 traverse the membrane as a helical segment; the sequence is RNSMLIVNLLAIAGGCLMGFC. The Extracellular segment spans residues 112 to 118; that stretch reads KIAESVE. Residues 119–142 traverse the membrane as a helical segment; the sequence is MLILGRLIIGLFCGLCTGFVPMYI. At 143-153 the chain is on the cytoplasmic side; the sequence is GEISPTALRGA. A helical membrane pass occupies residues 154-174; the sequence is FGTLNQLGIVIGILVAQIFGL. Gln159 serves as a coordination point for D-glucose. The Extracellular portion of the chain corresponds to 175–183; it reads KVILGTEDL. A helical transmembrane segment spans residues 184 to 204; the sequence is WPLLLGFTILPAIIQCAALPF. Topologically, residues 205-269 are cytoplasmic; that stretch reads CPESPRFLLI…LFRAPNYRQP (65 aa). Thr232 is modified (phosphothreonine). Residues 270–290 traverse the membrane as a helical segment; sequence IIISIMLQLSQQLSGINAVFY. The segment at 277–279 is important for selectivity against fructose; the sequence is QLS. D-glucose-binding positions include 280 to 281 and Asn286; that span reads QQ. Topologically, residues 291–304 are extracellular; it reads YSTGIFKDAGVQEP. The chain crosses the membrane as a helical span at residues 305-325; the sequence is VYATIGAGVVNTIFTVVSVFL. Residue Asn315 participates in D-glucose binding. Residues 326-331 are Cytoplasmic-facing; sequence VERAGR. Residues 332 to 352 traverse the membrane as a helical segment; that stretch reads RTLHLIGLGGMAFCSILMTIS. Topologically, residues 353-363 are extracellular; it reads LLLKDNYSWMS. Residues 364–389 form a helical membrane-spanning segment; sequence FICIGAILVFVAFFEIGPGPIPWFIV. D-glucose is bound by residues Glu378 and Trp386. Residues 390–399 lie on the Cytoplasmic side of the membrane; sequence AELFGQGPRP. Residues 400–420 traverse the membrane as a helical segment; sequence AAMAVAGCSNWTSNFLVGLLF. Topologically, residues 421–429 are extracellular; the sequence is PSATFYLGA. A helical membrane pass occupies residues 430 to 450; sequence YVFIVFTVFLVIFWVFTFFKV. Over 451 to 494 the chain is Cytoplasmic; that stretch reads PETRGRTFEEITRAFEGQVQTGTRGEKGPIMEMNSIQPTKDTNA. Residues 473-494 form a disordered region; it reads TRGEKGPIMEMNSIQPTKDTNA. A compositionally biased stretch (polar residues) spans 484 to 494; the sequence is NSIQPTKDTNA. At Ser485 the chain carries Phosphoserine. Thr492 carries the post-translational modification Phosphothreonine.

It belongs to the major facilitator superfamily. Sugar transporter (TC 2.A.1.1) family. Glucose transporter subfamily. In terms of assembly, interacts with SMIM43; the interaction may promote SLC2A3-mediated glucose transport to meet the energy needs of mesendoderm differentiation. As to expression, detected in placenta.

Its subcellular location is the cell membrane. The protein resides in the perikaryon. The protein localises to the cell projection. It catalyses the reaction D-glucose(out) = D-glucose(in). The catalysed reaction is D-galactose(in) = D-galactose(out). With respect to regulation, deoxyglucose transport is inhibited by D-glucose, D-galactose and maltose. Galactose transport is inhibited by D-glucose and maltose. Functionally, facilitative glucose transporter. Can also mediate the uptake of various other monosaccharides across the cell membrane. Mediates the uptake of glucose, 2-deoxyglucose, galactose, mannose, xylose and fucose, and probably also dehydroascorbate. Does not mediate fructose transport. Required for mesendoderm differentiation. The chain is Solute carrier family 2, facilitated glucose transporter member 3 from Ovis aries (Sheep).